The chain runs to 145 residues: Large ribosomal subunit protein bL19 (145 aa).

A compositionally biased stretch (basic and acidic residues) spans 112 to 130 (GKSARIKERRPAKAVEKTS). The interval 112 to 145 (GKSARIKERRPAKAVEKTSKPASAKKPAAKANKK) is disordered.

It belongs to the bacterial ribosomal protein bL19 family.

In terms of biological role, this protein is located at the 30S-50S ribosomal subunit interface and may play a role in the structure and function of the aminoacyl-tRNA binding site. This chain is Large ribosomal subunit protein bL19, found in Malacoplasma penetrans (strain HF-2) (Mycoplasma penetrans).